We begin with the raw amino-acid sequence, 1112 residues long: Lacto-N-biosidase (1112 aa).

Positions 1–34 (MEKSSNRRFGVRTVAAIVAGLMVGGMCTAMTASA) are cleaved as a signal peptide. C187 and C189 are disulfide-bonded. Beta-D-galactosyl-(1-&gt;3)-N-acetyl-D-glucosamine contacts are provided by Q190, E216, N259, D320, E321, Y419, and D467. Residue E321 is the Proton donor/acceptor of the active site. C564 and C589 are joined by a disulfide. Residues 938–969 (ATPVELTEPEQPKDNPEVTETPEATGVTVSGD) form a disordered region. A BIG2 domain is found at 975–1041 (ALSLKKGTTA…ANGKSASVTV (67 aa)). Residues 1044–1061 (TEDSEVPGPTGPTEPTKP) show a composition bias toward low complexity. A disordered region spans residues 1044-1081 (TEDSEVPGPTGPTEPTKPGTEKPTTKPTTKPNDGKLSA). The chain crosses the membrane as a helical span at residues 1086-1106 (TAVLATIAALFALAGGAVVAV).

It belongs to the glycosyl hydrolase 20 family.

The protein resides in the cell membrane. It catalyses the reaction beta-D-Gal-(1-&gt;3)-beta-D-GlcNAc-(1-&gt;3)-beta-D-Gal-(1-&gt;4)-D-Glc + H2O = beta-D-galactosyl-(1-&gt;3)-N-acetyl-D-glucosamine + lactose. Present in the infant gut, this enzyme is involved in the assimilation of type-1 human milk oligosaccharides (HMOs). It hydrolyzes via a retaining mechanism the beta-D-GlcNAc-(1-&gt;3)-beta-D-Gal linkage in lacto-N-tetraose (LNT or beta-D-Gal-(1-&gt;3)-beta-D-GlcNAc-(1-&gt;3)-beta-D-Gal-(1-&gt;4)-D-Glc), an abundant HMO unique to human breast milk, releasing lacto-N-biose (LNB or beta-D-Gal-(1-&gt;3)-D-GlcNAc) and lactose. Is a key enzymatic factor for growth and proliferation of B.bifidum in the gut ecosystem of breast-fed infants. Has substrate preference for unmodified beta-linked LNB since it does not hydrolyze the fucosylated forms of lacto-N-tetraose (lacto-N-fucopentaose I and II) or lacto-N-neotetraose. Is also able to display transglycosylation activity in vitro. This chain is Lacto-N-biosidase, found in Bifidobacterium bifidum (strain DSM 20082 / JCM 1254 / BCRC 11844 / KCTC 3440 / E319f (Variant a)).